Reading from the N-terminus, the 141-residue chain is Hydroperoxide reductase (141 aa).

The protein belongs to the OsmC/Ohr family. As to quaternary structure, homodimer.

The protein localises to the cytoplasm. In terms of biological role, reduces organic and inorganic peroxide substrates. Protects the cell against oxidative stress. This Mycoplasma pneumoniae (strain ATCC 29342 / M129 / Subtype 1) (Mycoplasmoides pneumoniae) protein is Hydroperoxide reductase.